We begin with the raw amino-acid sequence, 107 residues long: U1-lycotoxin-Ls1b (107 aa).

A signal peptide spans 1–20 (MMKALVVVALLVTLISYSSS). Positions 21 to 41 (EGIDDLEADELLSLMANEQTR) are excised as a propeptide. Disulfide bonds link C44-C59, C51-C68, C58-C86, and C70-C84.

Belongs to the neurotoxin 19 (CSTX) family. 04 (U1-Lctx) subfamily. Expressed by the venom gland.

It is found in the secreted. This Lycosa singoriensis (Wolf spider) protein is U1-lycotoxin-Ls1b.